A 259-amino-acid chain; its full sequence is LOB domain-containing protein CRL1 (259 aa).

In terms of domain architecture, LOB spans 6–108 (SPCGACKFLR…AQLASLKAAA (103 aa)).

The protein belongs to the LOB domain-containing protein family. In terms of assembly, can form homodimers. In terms of tissue distribution, expressed in unelongating basal internodes, at the base of shoot in parenchyma cells adjacent to the peripheral vascular cylinder of the stem, and root pericycle cells. Expressed in lateral and adventitious root primordia, tiller primordia, vascular tissues, scutellum, and young pedicels.

The protein localises to the nucleus. In terms of biological role, acts as a positive regulator of adventitious (crown) root formation by promoting its initiation. Acts as a positive regulator of lateral root formation. Regulated by the auxin response factor and transcriptional activator ARF23/ARF1. Involved in auxin-mediated cell dedifferentiation, and may promote the initial cell division in the pericycle cells adjacent to the peripheral vascular cylinder at the base of the stem. May act upstream of the gene regulatory network controlling adventitious root (crown) development. The chain is LOB domain-containing protein CRL1 from Oryza sativa subsp. japonica (Rice).